Reading from the N-terminus, the 61-residue chain is Protein YncO (61 aa).

Residues 18–38 (HVFLYVFYIFLFLVLFIMTIY) form a helical membrane-spanning segment.

It is found in the cell inner membrane. The sequence is that of Protein YncO from Escherichia coli (strain K12).